An 874-amino-acid polypeptide reads, in one-letter code: Probable inorganic carbon transporter subunit DabA (874 aa).

Zn(2+)-binding residues include Cys-398, Asp-400, His-580, and Cys-595.

It belongs to the inorganic carbon transporter (TC 9.A.2) DabA family. Forms a complex with DabB. Zn(2+) serves as cofactor.

The protein localises to the cell membrane. Part of an energy-coupled inorganic carbon pump. This chain is Probable inorganic carbon transporter subunit DabA, found in Bacillus cytotoxicus (strain DSM 22905 / CIP 110041 / 391-98 / NVH 391-98).